Consider the following 359-residue polypeptide: MMKDKEHVIVGISGGVDSAVAACILIENGYRVTGLHIKVLDHSDDSLHLEKSPLIISDRKEFRFPVFSLNLSGSFRRDVIDYFLQDYLSGRTPNPCMVCNKLIKWKGLLKGADLLQATLVATGHYARIDCGREKCRLLKGTDSQKDQSYFLWMLSSEELSKTLLPVGNLTKQEVRELARRFGVRAAEKKESQEICFVPDNDYREVVKSSRPGLAEKLTGGEIIDTEGKVIGHHAGYPFYTIGQRKGLGISSPEPLYVNRLDPEKNRIRVGGKAMLQCRKLIAGQMNWTGISPPETSTRAAARIRYRDTGEACTIVPVEKERFEVIFDKPKQSVTPGQAVVFYRDDEVIGGGIIVEAISE.

Residues 11 to 18 (GISGGVDS) and I37 each bind ATP. C99 acts as the Nucleophile in catalysis. Cysteines 99 and 195 form a disulfide. G123 contributes to the ATP binding site. The interaction with tRNA stretch occupies residues 145 to 147 (KDQ). Catalysis depends on C195, which acts as the Cysteine persulfide intermediate. The segment at 304–305 (RY) is interaction with tRNA.

This sequence belongs to the MnmA/TRMU family.

The protein localises to the cytoplasm. It carries out the reaction S-sulfanyl-L-cysteinyl-[protein] + uridine(34) in tRNA + AH2 + ATP = 2-thiouridine(34) in tRNA + L-cysteinyl-[protein] + A + AMP + diphosphate + H(+). In terms of biological role, catalyzes the 2-thiolation of uridine at the wobble position (U34) of tRNA, leading to the formation of s(2)U34. The chain is tRNA-specific 2-thiouridylase MnmA from Chlorobium phaeobacteroides (strain BS1).